Reading from the N-terminus, the 157-residue chain is Arginine regulator (157 aa).

The protein belongs to the ArgR family.

It is found in the cytoplasm. The protein operates within amino-acid degradation; L-arginine degradation via ADI pathway. In terms of biological role, regulates the transcription of the arc operon, involved in arginine catabolism. This chain is Arginine regulator (argR1), found in Streptococcus pyogenes serotype M3 (strain ATCC BAA-595 / MGAS315).